A 683-amino-acid chain; its full sequence is FAD-binding monooxygenase ausC (683 aa).

The N-linked (GlcNAc...) asparagine glycan is linked to Asn-5. Residues 111–131 (ILIIGAGFGGLLFAVRLIQTG) form a helical membrane-spanning segment. FAD is bound by residues 150–153 (TWYW), 162–163 (DT), and Tyr-168. NADP(+) is bound at residue 160–162 (MCD). A glycan (N-linked (GlcNAc...) asparagine) is linked at Asn-286. Residues 310–316 (TGASAVQ) and 333–334 (RT) contribute to the NADP(+) site. Asn-525 and Asn-572 each carry an N-linked (GlcNAc...) asparagine glycan.

The protein belongs to the FAD-binding monooxygenase family. FAD is required as a cofactor.

It is found in the membrane. It catalyses the reaction preaustinoid A + AH2 + O2 = preaustinoid A1 + A + H2O. Its pathway is secondary metabolite biosynthesis; terpenoid biosynthesis. FAD-binding monooxygenase; part of the gene cluster A that mediates the biosynthesis of austinol and dehydroaustinol, two fungal meroterpenoids. The first step of the pathway is the synthesis of 3,5-dimethylorsellinic acid by the polyketide synthase ausA. 3,5-dimethylorsellinic acid is then prenylated by the polyprenyl transferase ausN. Further epoxidation by the FAD-dependent monooxygenase ausM and cyclization by the probable terpene cyclase ausL lead to the formation of protoaustinoid A. Protoaustinoid A is then oxidized to spiro-lactone preaustinoid A3 by the combined action of the FAD-binding monooxygenases ausB and ausC, and the dioxygenase ausE. Acid-catalyzed keto-rearrangement and ring contraction of the tetraketide portion of preaustinoid A3 by ausJ lead to the formation of preaustinoid A4. The aldo-keto reductase ausK, with the help of ausH, is involved in the next step by transforming preaustinoid A4 into isoaustinone which is in turn hydroxylated by the P450 monooxygenase ausI to form austinolide. Finally, the cytochrome P450 monooxygenase ausG modifies austinolide to austinol. Austinol can be further modified to dehydroaustinol which forms a diffusible complex with diorcinol that initiates conidiation. Due to genetic rearrangements of the clusters and the subsequent loss of some enzymes, the end products of the Emericella nidulans austinoid biosynthesis clusters are austinol and dehydroaustinol, even if additional enzymes, such as the O-acetyltransferase ausQ and the cytochrome P450 monooxygenase ausR are still functional. This chain is FAD-binding monooxygenase ausC, found in Emericella nidulans (strain FGSC A4 / ATCC 38163 / CBS 112.46 / NRRL 194 / M139) (Aspergillus nidulans).